The following is a 115-amino-acid chain: uncharacterized protein (115 aa).

This is an uncharacterized protein from Haemophilus influenzae (strain ATCC 51907 / DSM 11121 / KW20 / Rd).